The following is a 411-amino-acid chain: LL-diaminopimelate aminotransferase (411 aa).

2 residues coordinate substrate: tyrosine 15 and glycine 42. Residues tyrosine 72, 108 to 109 (AK), tyrosine 132, asparagine 187, tyrosine 218, and 246 to 248 (SFS) each bind pyridoxal 5'-phosphate. Positions 109, 132, and 187 each coordinate substrate. N6-(pyridoxal phosphate)lysine is present on lysine 249. 2 residues coordinate pyridoxal 5'-phosphate: arginine 257 and asparagine 292. Residues asparagine 292 and arginine 388 each contribute to the substrate site.

The protein belongs to the class-I pyridoxal-phosphate-dependent aminotransferase family. LL-diaminopimelate aminotransferase subfamily. In terms of assembly, homodimer. Requires pyridoxal 5'-phosphate as cofactor.

It catalyses the reaction (2S,6S)-2,6-diaminopimelate + 2-oxoglutarate = (S)-2,3,4,5-tetrahydrodipicolinate + L-glutamate + H2O + H(+). The protein operates within amino-acid biosynthesis; L-lysine biosynthesis via DAP pathway; LL-2,6-diaminopimelate from (S)-tetrahydrodipicolinate (aminotransferase route): step 1/1. Its function is as follows. Involved in the synthesis of meso-diaminopimelate (m-DAP or DL-DAP), required for both lysine and peptidoglycan biosynthesis. Catalyzes the direct conversion of tetrahydrodipicolinate to LL-diaminopimelate. In Crocosphaera subtropica (strain ATCC 51142 / BH68) (Cyanothece sp. (strain ATCC 51142)), this protein is LL-diaminopimelate aminotransferase.